The following is a 188-amino-acid chain: ATP synthase subunit b 2 (188 aa).

Residues 41 to 61 (FFWLVISFGFFYFFIARVIVP) traverse the membrane as a helical segment.

This sequence belongs to the ATPase B chain family. F-type ATPases have 2 components, F(1) - the catalytic core - and F(0) - the membrane proton channel. F(1) has five subunits: alpha(3), beta(3), gamma(1), delta(1), epsilon(1). F(0) has three main subunits: a(1), b(2) and c(10-14). The alpha and beta chains form an alternating ring which encloses part of the gamma chain. F(1) is attached to F(0) by a central stalk formed by the gamma and epsilon chains, while a peripheral stalk is formed by the delta and b chains.

It is found in the cell inner membrane. Its function is as follows. F(1)F(0) ATP synthase produces ATP from ADP in the presence of a proton or sodium gradient. F-type ATPases consist of two structural domains, F(1) containing the extramembraneous catalytic core and F(0) containing the membrane proton channel, linked together by a central stalk and a peripheral stalk. During catalysis, ATP synthesis in the catalytic domain of F(1) is coupled via a rotary mechanism of the central stalk subunits to proton translocation. Component of the F(0) channel, it forms part of the peripheral stalk, linking F(1) to F(0). The b'-subunit is a diverged and duplicated form of b found in plants and photosynthetic bacteria. The sequence is that of ATP synthase subunit b 2 (atpF2) from Bartonella bacilliformis (strain ATCC 35685 / KC583 / Herrer 020/F12,63).